The sequence spans 310 residues: Light-independent protochlorophyllide reductase iron-sulfur ATP-binding protein (310 aa).

ATP is bound by residues 53 to 58 (GIGKST) and Lys-82. Mg(2+) is bound at residue Ser-57. Residues Cys-138 and Cys-172 each coordinate [4Fe-4S] cluster. Residues 223–224 (NR) and 247–249 (PAL) contribute to the ATP site.

The protein belongs to the NifH/BchL/ChlL family. Homodimer. Protochlorophyllide reductase is composed of three subunits; BchL, BchN and BchB. [4Fe-4S] cluster serves as cofactor.

The catalysed reaction is chlorophyllide a + oxidized 2[4Fe-4S]-[ferredoxin] + 2 ADP + 2 phosphate = protochlorophyllide a + reduced 2[4Fe-4S]-[ferredoxin] + 2 ATP + 2 H2O. The protein operates within porphyrin-containing compound metabolism; bacteriochlorophyll biosynthesis (light-independent). Functionally, component of the dark-operative protochlorophyllide reductase (DPOR) that uses Mg-ATP and reduced ferredoxin to reduce ring D of protochlorophyllide (Pchlide) to form chlorophyllide a (Chlide). This reaction is light-independent. The L component serves as a unique electron donor to the NB-component of the complex, and binds Mg-ATP. This is Light-independent protochlorophyllide reductase iron-sulfur ATP-binding protein from Rhodopseudomonas palustris (strain BisA53).